A 161-amino-acid polypeptide reads, in one-letter code: Allophycocyanin alpha chain (161 aa).

N4-methylasparagine is present on Asn71. Residue Cys81 coordinates (2R,3E)-phycocyanobilin.

This sequence belongs to the phycobiliprotein family. In terms of assembly, heterodimer of an alpha and a beta chain. Contains one covalently linked phycocyanobilin chromophore.

The protein localises to the plastid. It localises to the chloroplast thylakoid membrane. Its function is as follows. Light-harvesting photosynthetic bile pigment-protein from the phycobiliprotein complex. Allophycocyanin has a maximum absorption at approximately 650 nanometers. This chain is Allophycocyanin alpha chain (apcA), found in Porphyra purpurea (Red seaweed).